Reading from the N-terminus, the 509-residue chain is Scavenger receptor class B member 1 (509 aa).

The Cytoplasmic portion of the chain corresponds to 1–11 (MGVSSRARWVA). A helical transmembrane segment spans residues 12–32 (LGLGVLGLLCAALGVIMILMV). The Extracellular portion of the chain corresponds to 33-440 (PSLIKQQVLK…YTQLVLMPQV (408 aa)). 10 N-linked (GlcNAc...) asparagine glycosylation sites follow: Asn-102, Asn-108, Asn-116, Asn-173, Asn-212, Asn-227, Asn-255, Asn-310, Asn-330, and Asn-383. A disulfide bridge connects residues Cys-251 and Cys-384. Residues 441 to 461 (LHYAQYVLLGLGGLLLLVPII) traverse the membrane as a helical segment. The Cytoplasmic portion of the chain corresponds to 462-509 (YQLRSQEKCFLFWSGSKKGSQDKEAMQAYSESLMSPAAKGTVLQEAKL).

Belongs to the CD36 family. In terms of assembly, the C-terminal region binds to PDZK1. N-glycosylated. Post-translationally, the six cysteines of the extracellular domain are all involved in intramolecular disulfide bonds.

It localises to the cell membrane. The protein localises to the membrane. It is found in the caveola. In terms of biological role, receptor for different ligands such as phospholipids, cholesterol ester, lipoproteins, phosphatidylserine and apoptotic cells. Receptor for HDL, mediating selective uptake of cholesteryl ether and HDL-dependent cholesterol efflux. Also facilitates the flux of free and esterified cholesterol between the cell surface and apoB-containing lipoproteins and modified lipoproteins, although less efficiently than HDL. May be involved in the phagocytosis of apoptotic cells, via its phosphatidylserine binding activity. This Rattus norvegicus (Rat) protein is Scavenger receptor class B member 1 (Scarb1).